Reading from the N-terminus, the 296-residue chain is Polyamine aminopropyltransferase (296 aa).

In terms of domain architecture, PABS spans 16-251; the sequence is HLWYFEYYTG…GMWSYTFASK (236 aa). An S-methyl-5'-thioadenosine-binding site is contributed by Gln-46. The spermidine site is built by His-77 and Asp-101. S-methyl-5'-thioadenosine-binding positions include Glu-121 and 152–153; that span reads NG. Catalysis depends on Asp-170, which acts as the Proton acceptor. Position 170-173 (170-173) interacts with spermidine; it reads DSTD.

The protein belongs to the spermidine/spermine synthase family. Homodimer or homotetramer.

It is found in the cytoplasm. The enzyme catalyses S-adenosyl 3-(methylsulfanyl)propylamine + putrescine = S-methyl-5'-thioadenosine + spermidine + H(+). It participates in amine and polyamine biosynthesis; spermidine biosynthesis; spermidine from putrescine: step 1/1. Catalyzes the irreversible transfer of a propylamine group from the amino donor S-adenosylmethioninamine (decarboxy-AdoMet) to putrescine (1,4-diaminobutane) to yield spermidine. The polypeptide is Polyamine aminopropyltransferase (Thermotoga petrophila (strain ATCC BAA-488 / DSM 13995 / JCM 10881 / RKU-1)).